The chain runs to 268 residues: L-aspartate dehydrogenase (268 aa).

2 residues coordinate NAD(+): A125 and N191. The active site involves H221.

Belongs to the L-aspartate dehydrogenase family.

It catalyses the reaction L-aspartate + NADP(+) + H2O = oxaloacetate + NH4(+) + NADPH + H(+). It carries out the reaction L-aspartate + NAD(+) + H2O = oxaloacetate + NH4(+) + NADH + H(+). It participates in cofactor biosynthesis; NAD(+) biosynthesis; iminoaspartate from L-aspartate (dehydrogenase route): step 1/1. Specifically catalyzes the NAD or NADP-dependent dehydrogenation of L-aspartate to iminoaspartate. In Ralstonia nicotianae (strain ATCC BAA-1114 / GMI1000) (Ralstonia solanacearum), this protein is L-aspartate dehydrogenase.